Consider the following 271-residue polypeptide: Tryptophan synthase alpha chain (271 aa).

Catalysis depends on proton acceptor residues glutamate 49 and aspartate 60.

This sequence belongs to the TrpA family. In terms of assembly, tetramer of two alpha and two beta chains.

The enzyme catalyses (1S,2R)-1-C-(indol-3-yl)glycerol 3-phosphate + L-serine = D-glyceraldehyde 3-phosphate + L-tryptophan + H2O. It participates in amino-acid biosynthesis; L-tryptophan biosynthesis; L-tryptophan from chorismate: step 5/5. Functionally, the alpha subunit is responsible for the aldol cleavage of indoleglycerol phosphate to indole and glyceraldehyde 3-phosphate. The polypeptide is Tryptophan synthase alpha chain (Burkholderia cenocepacia (strain ATCC BAA-245 / DSM 16553 / LMG 16656 / NCTC 13227 / J2315 / CF5610) (Burkholderia cepacia (strain J2315))).